A 279-amino-acid polypeptide reads, in one-letter code: Movement protein (279 aa).

The tract at residues 255–279 (SPPFAIGSPSASRNNSFRSQVVNGL) is disordered. Residues 263–279 (PSASRNNSFRSQVVNGL) show a composition bias toward polar residues.

The protein belongs to the cucumovirus movement protein family.

It is found in the host cell junction. It localises to the host plasmodesma. Functionally, transports viral genome to neighboring plant cells directly through plasmosdesmata, without any budding. The movement protein allows efficient cell to cell propagation, by bypassing the host cell wall barrier. Acts by forming a tubular structure at the host plasmodesmata, enlarging it enough to allow free passage of virion capsids. This is Movement protein from Cucumis sativus (Cucumber).